A 193-amino-acid polypeptide reads, in one-letter code: ATP-dependent Clp protease proteolytic subunit 1 (193 aa).

S98 acts as the Nucleophile in catalysis. H123 is a catalytic residue.

The protein belongs to the peptidase S14 family. Fourteen ClpP subunits assemble into 2 heptameric rings which stack back to back to give a disk-like structure with a central cavity, resembling the structure of eukaryotic proteasomes.

Its subcellular location is the cytoplasm. It catalyses the reaction Hydrolysis of proteins to small peptides in the presence of ATP and magnesium. alpha-casein is the usual test substrate. In the absence of ATP, only oligopeptides shorter than five residues are hydrolyzed (such as succinyl-Leu-Tyr-|-NHMec, and Leu-Tyr-Leu-|-Tyr-Trp, in which cleavage of the -Tyr-|-Leu- and -Tyr-|-Trp bonds also occurs).. Cleaves peptides in various proteins in a process that requires ATP hydrolysis. Has a chymotrypsin-like activity. Plays a major role in the degradation of misfolded proteins. The chain is ATP-dependent Clp protease proteolytic subunit 1 from Bacillus anthracis.